The chain runs to 146 residues: Glycosylation-dependent cell adhesion molecule 1 (146 aa).

The first 19 residues, 1–19 (MKFFTVLLFASLAATSLAA), serve as a signal peptide directing secretion. The disordered stretch occupies residues 25-112 (DELHLRTQPT…SAATSEGKLT (88 aa)). Residues 48 to 60 (ISKESTSSKDLSK) are compositionally biased toward basic and acidic residues. Residues serine 54, serine 59, and serine 71 each carry the phosphoserine modification. Polar residues predominate over residues 74–106 (NVGTESTKPQSQEAQDGLRSGSSQQEETTSAAT).

This sequence belongs to the PP3/GlyCAM-1 family. Extensively O-glycosylated. Lymph nodes. Associated with the lumenal surface of the high endothelial venules of peripheral lymph nodes.

It is found in the cell membrane. Its function is as follows. Adhesion molecule that accomplishes cell binding by presenting carbohydrate(s) to the lectin domain of L-selectin. The sequence is that of Glycosylation-dependent cell adhesion molecule 1 (Glycam1) from Rattus norvegicus (Rat).